The chain runs to 540 residues: MKRALISVYDKQGIVEFARGLADLGVEIISTGGTYRTLQGAGIPVREVAEVAGFPEILDGRVKSLQPQIHAGILAMRANPTHMAQLAEHGIGLIDLVVVNLYPFRETVANPAVTLEEAIEKIDIGGPAMVRAAAKNYQDVGVVVNPARYPAVLAELRETGDLSLPTRFSLMLEAFQHTAAYDGAIAGWMATRGREIVATRALGETAPERPIGADPGPQKPAAPSPFPDVLSLTFTKVQELRYGENPHQAAAFYSDGSDGGTVIARAKQLHGKELSFNNINDAHAALELVKEFEEPAAVAIKHANPCGVAVAPTIAEAFRKAYEADTVSIFGGIVALNRPCDRETAEALSKIFLEIVIAPAFAPEALEVLTRKKNLRLLAVGPIDRNPPSGFDMKRVGGGLLVQSWDAIAEDPVAWKPVTKAAPTPEQLRDLAFAMKVCKHVKSNAIVVARDGQTLGVGAGQMNRIDAARFALRQAGEKARGAVLASDAFFPFPDVVEAAGEAGIAAIVQPGGSIRDEESIARADELGLAMVFTGVRHFRH.

Residues 1-144 (MKRALISVYD…KNYQDVGVVV (144 aa)) form the MGS-like domain. A disordered region spans residues 204-224 (ETAPERPIGADPGPQKPAAPS).

Belongs to the PurH family.

The enzyme catalyses (6R)-10-formyltetrahydrofolate + 5-amino-1-(5-phospho-beta-D-ribosyl)imidazole-4-carboxamide = 5-formamido-1-(5-phospho-D-ribosyl)imidazole-4-carboxamide + (6S)-5,6,7,8-tetrahydrofolate. It catalyses the reaction IMP + H2O = 5-formamido-1-(5-phospho-D-ribosyl)imidazole-4-carboxamide. It participates in purine metabolism; IMP biosynthesis via de novo pathway; 5-formamido-1-(5-phospho-D-ribosyl)imidazole-4-carboxamide from 5-amino-1-(5-phospho-D-ribosyl)imidazole-4-carboxamide (10-formyl THF route): step 1/1. Its pathway is purine metabolism; IMP biosynthesis via de novo pathway; IMP from 5-formamido-1-(5-phospho-D-ribosyl)imidazole-4-carboxamide: step 1/1. This chain is Bifunctional purine biosynthesis protein PurH, found in Symbiobacterium thermophilum (strain DSM 24528 / JCM 14929 / IAM 14863 / T).